We begin with the raw amino-acid sequence, 102 residues long: Cuticle protein AM/CP1114 (102 aa).

The Chitin-binding type R&amp;R domain occupies 16 to 81 (DGNFHYSFET…VESPLLPSIP (66 aa)). Residues 23–33 (FETSNGIQDTK) are compositionally biased toward polar residues. The interval 23 to 50 (FETSNGIQDTKTGVPGSAGQSNMNGDFS) is disordered.

Arthrodial membrane and calcified shell.

The chain is Cuticle protein AM/CP1114 from Cancer pagurus (Rock crab).